Here is an 827-residue protein sequence, read N- to C-terminus: Translation initiation factor IF-2 (827 aa).

The segment at 49 to 205 (ALNREKEEKE…GAPDKKREWE (157 aa)) is disordered. Composition is skewed to basic and acidic residues over residues 50–73 (LNREKEEKEKKEQEKKQVEQKAEA), 96–106 (RPREQRSDRPQ), 116–129 (PEPRDKDKGRRPGE), 137–150 (RPRDDRRRFDKERG), 157–168 (FGEKKERPPFPR), and 182–205 (EAPKGENKEPERRKGAPDKKREWE). In terms of domain architecture, tr-type G spans 326 to 495 (PRPPIVTVMG…LLVADLKELK (170 aa)). The interval 335-342 (GHVDHGKT) is G1. 335–342 (GHVDHGKT) contributes to the GTP binding site. The G2 stretch occupies residues 360–364 (GITQH). Positions 381–384 (DTPG) are G3. GTP-binding positions include 381-385 (DTPGH) and 435-438 (NKID). A G4 region spans residues 435–438 (NKID). Residues 471–473 (SAL) form a G5 region.

It belongs to the TRAFAC class translation factor GTPase superfamily. Classic translation factor GTPase family. IF-2 subfamily.

It is found in the cytoplasm. In terms of biological role, one of the essential components for the initiation of protein synthesis. Protects formylmethionyl-tRNA from spontaneous hydrolysis and promotes its binding to the 30S ribosomal subunits. Also involved in the hydrolysis of GTP during the formation of the 70S ribosomal complex. The chain is Translation initiation factor IF-2 from Carboxydothermus hydrogenoformans (strain ATCC BAA-161 / DSM 6008 / Z-2901).